Reading from the N-terminus, the 256-residue chain is 1-(5-phosphoribosyl)-5-[(5-phosphoribosylamino)methylideneamino] imidazole-4-carboxamide isomerase (256 aa).

The active-site Proton acceptor is Asp8. Catalysis depends on Asp129, which acts as the Proton donor.

This sequence belongs to the HisA/HisF family.

It is found in the cytoplasm. It carries out the reaction 1-(5-phospho-beta-D-ribosyl)-5-[(5-phospho-beta-D-ribosylamino)methylideneamino]imidazole-4-carboxamide = 5-[(5-phospho-1-deoxy-D-ribulos-1-ylimino)methylamino]-1-(5-phospho-beta-D-ribosyl)imidazole-4-carboxamide. The protein operates within amino-acid biosynthesis; L-histidine biosynthesis; L-histidine from 5-phospho-alpha-D-ribose 1-diphosphate: step 4/9. The chain is 1-(5-phosphoribosyl)-5-[(5-phosphoribosylamino)methylideneamino] imidazole-4-carboxamide isomerase from Prochlorococcus marinus (strain NATL2A).